The sequence spans 406 residues: Argininosuccinate synthase (406 aa).

ATP-binding positions include 11–19 (AYSGGLDTS) and A38. 2 residues coordinate L-citrulline: Y91 and S96. Residue G121 coordinates ATP. Residues T123, N127, and D128 each coordinate L-aspartate. N127 provides a ligand contact to L-citrulline. R131, S181, S190, E266, and Y278 together coordinate L-citrulline.

The protein belongs to the argininosuccinate synthase family. Type 1 subfamily. In terms of assembly, homotetramer.

It is found in the cytoplasm. It carries out the reaction L-citrulline + L-aspartate + ATP = 2-(N(omega)-L-arginino)succinate + AMP + diphosphate + H(+). The protein operates within amino-acid biosynthesis; L-arginine biosynthesis; L-arginine from L-ornithine and carbamoyl phosphate: step 2/3. This Campylobacter jejuni subsp. doylei (strain ATCC BAA-1458 / RM4099 / 269.97) protein is Argininosuccinate synthase.